The sequence spans 315 residues: MTTEPLFFKPVFKERIWGGTALADFGYTIPSQRTGECWAFAAHQNGQSVVQNGMYKGFTLSELWEHHRHLFGQLEGDRFPLLTKILDADQDLSVQVHPNDEYANIHENGELGKTECWYIIDCQKDAEIIYGHNATTKEELTTMIERGEWDELLRRVKVKPGDFFYVPSGTVHAIGKGILALETQQNSDTTYRLYDYDRKDAEGKLRELHLKKSIEVIEVPSIPERHTVHHEQIEDLLTTTLIECAYFSVGKWNLSGSASLKQQKPFLLISVIEGEGRMISGEYVYPFKKGDHMLLPYGLGEFKLEGYAECIVSHL.

Residues H97, E115, and H172 each coordinate Zn(2+). The active site involves R192.

The protein belongs to the mannose-6-phosphate isomerase type 1 family. Zn(2+) serves as cofactor.

The enzyme catalyses D-mannose 6-phosphate = D-fructose 6-phosphate. In Bacillus subtilis (strain 168), this protein is Mannose-6-phosphate isomerase ManA (manA).